We begin with the raw amino-acid sequence, 620 residues long: DNA mismatch repair protein MutL (620 aa).

The segment at 353-375 (SRANGANDFTGRPFSGTERPRGG) is disordered.

The protein belongs to the DNA mismatch repair MutL/HexB family.

In terms of biological role, this protein is involved in the repair of mismatches in DNA. It is required for dam-dependent methyl-directed DNA mismatch repair. May act as a 'molecular matchmaker', a protein that promotes the formation of a stable complex between two or more DNA-binding proteins in an ATP-dependent manner without itself being part of a final effector complex. This Chelativorans sp. (strain BNC1) protein is DNA mismatch repair protein MutL.